The primary structure comprises 231 residues: ATP-dependent dethiobiotin synthetase BioD 2 (231 aa).

Residue 13 to 18 (SVGKTV) participates in ATP binding. Threonine 17 is a Mg(2+) binding site. Lysine 38 is an active-site residue. Residues aspartate 55, 112-115 (EGTG), 172-173 (NR), 201-203 (PYL), and glutamine 208 each bind ATP. Residues aspartate 55 and glutamate 112 each coordinate Mg(2+).

Belongs to the dethiobiotin synthetase family. As to quaternary structure, homodimer. Requires Mg(2+) as cofactor.

The protein resides in the cytoplasm. The enzyme catalyses (7R,8S)-7,8-diammoniononanoate + CO2 + ATP = (4R,5S)-dethiobiotin + ADP + phosphate + 3 H(+). Its pathway is cofactor biosynthesis; biotin biosynthesis; biotin from 7,8-diaminononanoate: step 1/2. In terms of biological role, catalyzes a mechanistically unusual reaction, the ATP-dependent insertion of CO2 between the N7 and N8 nitrogen atoms of 7,8-diaminopelargonic acid (DAPA, also called 7,8-diammoniononanoate) to form a ureido ring. The protein is ATP-dependent dethiobiotin synthetase BioD 2 of Escherichia coli O157:H7.